Here is a 427-residue protein sequence, read N- to C-terminus: Enolase (427 aa).

Residue Q163 participates in (2R)-2-phosphoglycerate binding. E205 serves as the catalytic Proton donor. 3 residues coordinate Mg(2+): D242, E285, and D312. 4 residues coordinate (2R)-2-phosphoglycerate: K337, R366, S367, and K388. K337 serves as the catalytic Proton acceptor.

Belongs to the enolase family. Mg(2+) is required as a cofactor.

The protein localises to the cytoplasm. It is found in the secreted. The protein resides in the cell surface. The catalysed reaction is (2R)-2-phosphoglycerate = phosphoenolpyruvate + H2O. The protein operates within carbohydrate degradation; glycolysis; pyruvate from D-glyceraldehyde 3-phosphate: step 4/5. Catalyzes the reversible conversion of 2-phosphoglycerate (2-PG) into phosphoenolpyruvate (PEP). It is essential for the degradation of carbohydrates via glycolysis. The sequence is that of Enolase from Thiobacillus denitrificans (strain ATCC 25259 / T1).